Here is a 486-residue protein sequence, read N- to C-terminus: Glutamate--tRNA ligase (486 aa).

Residues 11-21 (PSPTGFLHIGG) carry the 'HIGH' region motif. Zn(2+) contacts are provided by Cys108, Cys110, Cys136, and His138. Positions 253 to 257 (KLSKR) match the 'KMSKS' region motif. Position 256 (Lys256) interacts with ATP.

This sequence belongs to the class-I aminoacyl-tRNA synthetase family. Glutamate--tRNA ligase type 1 subfamily. As to quaternary structure, monomer. Zn(2+) serves as cofactor.

It localises to the cytoplasm. The enzyme catalyses tRNA(Glu) + L-glutamate + ATP = L-glutamyl-tRNA(Glu) + AMP + diphosphate. Functionally, catalyzes the attachment of glutamate to tRNA(Glu) in a two-step reaction: glutamate is first activated by ATP to form Glu-AMP and then transferred to the acceptor end of tRNA(Glu). The sequence is that of Glutamate--tRNA ligase from Lysinibacillus sphaericus (strain C3-41).